The chain runs to 411 residues: Lysosome-associated membrane glycoprotein 3 (411 aa).

The first 21 residues, 1 to 21 (MPGQISAVAVLFLSLTVILHG), serve as a signal peptide directing secretion. Residues 22–376 (YQIREKEFPK…NVNECLSDYT (355 aa)) are Lumenal-facing. Residues 172–192 (HKSTTNQRPTLSTNVLGTSTP) show a composition bias toward polar residues. Residues 172-204 (HKSTTNQRPTLSTNVLGTSTPTHKDRSTTSPVP) are disordered. N-linked (GlcNAc...) asparagine glycosylation occurs at asparagine 227. Cystine bridges form between cysteine 232–cysteine 269 and cysteine 334–cysteine 371. A helical membrane pass occupies residues 377–397 (VVLPMVAIIVVVICVVGLSVY). The Cytoplasmic segment spans residues 398-411 (KIRQRHQSSAYQRI).

It belongs to the LAMP family. Monomer. Interacts with FURIN.

It is found in the cell surface. It localises to the lysosome membrane. The protein localises to the cytoplasmic vesicle membrane. Its subcellular location is the early endosome membrane. Functionally, lysosomal membrane glycoprotein which plays a role in the unfolded protein response (UPR) that contributes to protein degradation and cell survival during proteasomal dysfunction. Plays a role in the process of fusion of the lysosome with the autophagosome, thereby modulating the autophagic process. Promotes hepatocellular lipogenesis through activation of the PI3K/Akt pathway. May also play a role in dendritic cell function and in adaptive immunity. This Mus musculus (Mouse) protein is Lysosome-associated membrane glycoprotein 3 (Lamp3).